We begin with the raw amino-acid sequence, 82 residues long: Sec-independent protein translocase protein TatA (82 aa).

The chain crosses the membrane as a helical span at residues 1–21 (MLGFGPFELILIVVIIALLFG). The segment covering 36-47 (IKEFKQEMHEPS) has biased composition (basic and acidic residues). The disordered stretch occupies residues 36–82 (IKEFKQEMHEPSPPRPQVTDIPSQRLDPVTGAPVSTESTVPASDRRS).

This sequence belongs to the TatA/E family. Forms a complex with TatC.

It is found in the cell membrane. In terms of biological role, part of the twin-arginine translocation (Tat) system that transports large folded proteins containing a characteristic twin-arginine motif in their signal peptide across membranes. TatA could form the protein-conducting channel of the Tat system. This Deinococcus deserti (strain DSM 17065 / CIP 109153 / LMG 22923 / VCD115) protein is Sec-independent protein translocase protein TatA.